The primary structure comprises 85 residues: Small ribosomal subunit protein bS18 (85 aa).

It belongs to the bacterial ribosomal protein bS18 family. Part of the 30S ribosomal subunit. Forms a tight heterodimer with protein bS6.

Functionally, binds as a heterodimer with protein bS6 to the central domain of the 16S rRNA, where it helps stabilize the platform of the 30S subunit. This Solidesulfovibrio magneticus (strain ATCC 700980 / DSM 13731 / RS-1) (Desulfovibrio magneticus) protein is Small ribosomal subunit protein bS18.